The sequence spans 349 residues: Very-long-chain 3-oxoacyl-CoA reductase (349 aa).

Residues 29–49 (AASLVFATGGLFLLSRGLSFL) form a helical membrane-spanning segment. NADP(+) contacts are provided by Leu-74, Asp-129, Asp-137, Asn-156, Tyr-223, Lys-227, Val-256, and Ser-258. The active-site Proton donor is Tyr-223. Lys-227 acts as the Lowers pKa of active site Tyr in catalysis.

This sequence belongs to the short-chain dehydrogenases/reductases (SDR) family.

It localises to the endoplasmic reticulum membrane. The catalysed reaction is a very-long-chain (3R)-3-hydroxyacyl-CoA + NADP(+) = a very-long-chain 3-oxoacyl-CoA + NADPH + H(+). The protein operates within lipid metabolism; fatty acid biosynthesis. Component of the microsomal membrane bound fatty acid elongation system, which produces the 26-carbon very long-chain fatty acids (VLCFA) from palmitate. Catalyzes the reduction of the 3-ketoacyl-CoA intermediate that is formed in each cycle of fatty acid elongation. VLCFAs serve as precursors for ceramide and sphingolipids. The protein is Very-long-chain 3-oxoacyl-CoA reductase of Coccidioides immitis (strain RS) (Valley fever fungus).